Consider the following 276-residue polypeptide: Radial spoke head protein 9 homolog (276 aa).

Belongs to the flagellar radial spoke RSP9 family. In terms of assembly, component of the axonemal radial spoke 1 (RS1) and 2 (RS2) complexes, at least composed of spoke head proteins RSPH1, RSPH3, RSPH9 and the cilia-specific component RSPH4A or sperm-specific component RSPH6A, spoke stalk proteins RSPH14, DNAJB13, DYDC1, ROPN1L and NME5, and the RS1 complex-specific anchor protein IQUB. Interacts with IQUB. Interacts with RSPH3B. Interacts with RSPH4A. Interacts with RSPH6A. Interacts with CFAP61. Interacts with LRRC23. As to expression, expressed in the testis, trachea, lung, oviduct and ependymal cells (at protein level).

It localises to the cytoplasm. The protein localises to the cytoskeleton. Its subcellular location is the cilium axoneme. It is found in the flagellum axoneme. The protein resides in the cell projection. It localises to the kinocilium. Functionally, functions as part of axonemal radial spoke complexes that play an important part in the motility of sperm and cilia. Essential for both the radial spoke head assembly and the central pair microtubule stability in ependymal motile cilia. Required for motility of olfactory and neural cilia and for the structural integrity of ciliary axonemes in both 9+0 and 9+2 motile cilia. The protein is Radial spoke head protein 9 homolog (Rsph9) of Mus musculus (Mouse).